A 419-amino-acid chain; its full sequence is Zinc finger protein Pegasus (419 aa).

Lys5 is covalently cross-linked (Glycyl lysine isopeptide (Lys-Gly) (interchain with G-Cter in SUMO2)). A disordered region spans residues 36–55; sequence DKEAETLQGAGTDGDQNGLD. 3 C2H2-type zinc fingers span residues 82–104, 110–132, and 138–161; these read LKCR…IRIH, HRCH…MRSH, and YKCE…RRKH. Lys185 is covalently cross-linked (Glycyl lysine isopeptide (Lys-Gly) (interchain with G-Cter in SUMO2)). The span at 262–273 shows a compositional bias: polar residues; the sequence is LSSLPPENQNPA. Disordered regions lie at residues 262–284 and 297–356; these read LSSL…PDEK and VSAV…PTLP. Residues 297–311 show a composition bias toward low complexity; the sequence is VSAVSASIPQSSSPT. Over residues 332-349 the composition is skewed to polar residues; sequence SEPSAHTSTPSIGNSQPS. 2 C2H2-type zinc fingers span residues 364–386 and 392–416; these read HHCQ…MGCH and FQCN…RGQH.

It belongs to the Ikaros C2H2-type zinc-finger protein family. As to quaternary structure, self-associates. Interacts with other family members; IKZF1, IKZF2, IKZF3 and IKZF4.

The protein localises to the nucleus. Functionally, transcriptional repressor that binds the core 5'GNNTGTNG-3' DNA consensus sequence. Involved in megakaryocyte differentiation. The polypeptide is Zinc finger protein Pegasus (Ikzf5) (Mus musculus (Mouse)).